A 444-amino-acid chain; its full sequence is CCA-adding enzyme (444 aa).

2 residues coordinate ATP: Ser-57 and Arg-60. CTP contacts are provided by Ser-57 and Arg-60. Residues Asp-69, Asp-71, and Asp-124 each contribute to the Mg(2+) site. Residues His-147, Lys-168, and Tyr-177 each contribute to the ATP site. 3 residues coordinate CTP: His-147, Lys-168, and Tyr-177.

The protein belongs to the tRNA nucleotidyltransferase/poly(A) polymerase family. Archaeal CCA-adding enzyme subfamily. As to quaternary structure, homodimer. It depends on Mg(2+) as a cofactor.

The catalysed reaction is a tRNA precursor + 2 CTP + ATP = a tRNA with a 3' CCA end + 3 diphosphate. It carries out the reaction a tRNA with a 3' CCA end + 2 CTP + ATP = a tRNA with a 3' CCACCA end + 3 diphosphate. Catalyzes the addition and repair of the essential 3'-terminal CCA sequence in tRNAs without using a nucleic acid template. Adds these three nucleotides in the order of C, C, and A to the tRNA nucleotide-73, using CTP and ATP as substrates and producing inorganic pyrophosphate. tRNA 3'-terminal CCA addition is required both for tRNA processing and repair. Also involved in tRNA surveillance by mediating tandem CCA addition to generate a CCACCA at the 3' terminus of unstable tRNAs. While stable tRNAs receive only 3'-terminal CCA, unstable tRNAs are marked with CCACCA and rapidly degraded. This chain is CCA-adding enzyme, found in Methanococcus maripaludis (strain DSM 14266 / JCM 13030 / NBRC 101832 / S2 / LL).